The primary structure comprises 534 residues: Ethanolamine kinase (534 aa).

S23 carries the post-translational modification Phosphoserine.

The protein belongs to the choline/ethanolamine kinase family.

The protein resides in the cytoplasm. It catalyses the reaction ethanolamine + ATP = phosphoethanolamine + ADP + H(+). It carries out the reaction choline + ATP = phosphocholine + ADP + H(+). Its pathway is phospholipid metabolism; phosphatidylethanolamine biosynthesis; phosphatidylethanolamine from ethanolamine: step 1/3. In terms of biological role, catalyzes the committed step of phosphatidylethanolamine synthesis via the CDP-ethanolamine branch of the Kennedy pathway. Also exhibits choline kinase activity, thus contributing to phosphatidylcholine synthesis via the CDP-choline pathway, but its preferred substrate is ethanolamine. This is Ethanolamine kinase (EKI1) from Saccharomyces cerevisiae (strain ATCC 204508 / S288c) (Baker's yeast).